Reading from the N-terminus, the 262-residue chain is 3-methyl-2-oxobutanoate hydroxymethyltransferase (262 aa).

Residues D44 and D83 each coordinate Mg(2+). 3-methyl-2-oxobutanoate contacts are provided by residues 44–45, D83, and K112; that span reads DS. E114 lines the Mg(2+) pocket. E180 (proton acceptor) is an active-site residue.

The protein belongs to the PanB family. In terms of assembly, homodecamer; pentamer of dimers. It depends on Mg(2+) as a cofactor.

The protein resides in the cytoplasm. The enzyme catalyses 3-methyl-2-oxobutanoate + (6R)-5,10-methylene-5,6,7,8-tetrahydrofolate + H2O = 2-dehydropantoate + (6S)-5,6,7,8-tetrahydrofolate. It participates in cofactor biosynthesis; (R)-pantothenate biosynthesis; (R)-pantoate from 3-methyl-2-oxobutanoate: step 1/2. Its function is as follows. Catalyzes the reversible reaction in which hydroxymethyl group from 5,10-methylenetetrahydrofolate is transferred onto alpha-ketoisovalerate to form ketopantoate. This chain is 3-methyl-2-oxobutanoate hydroxymethyltransferase, found in Chromobacterium violaceum (strain ATCC 12472 / DSM 30191 / JCM 1249 / CCUG 213 / NBRC 12614 / NCIMB 9131 / NCTC 9757 / MK).